The sequence spans 306 residues: 4-hydroxy-tetrahydrodipicolinate synthase (306 aa).

Residue threonine 49 coordinates pyruvate. Tyrosine 136 (proton donor/acceptor) is an active-site residue. Catalysis depends on lysine 164, which acts as the Schiff-base intermediate with substrate. A pyruvate-binding site is contributed by isoleucine 207.

This sequence belongs to the DapA family. As to quaternary structure, homotetramer; dimer of dimers.

It localises to the cytoplasm. The enzyme catalyses L-aspartate 4-semialdehyde + pyruvate = (2S,4S)-4-hydroxy-2,3,4,5-tetrahydrodipicolinate + H2O + H(+). The protein operates within amino-acid biosynthesis; L-lysine biosynthesis via DAP pathway; (S)-tetrahydrodipicolinate from L-aspartate: step 3/4. Functionally, catalyzes the condensation of (S)-aspartate-beta-semialdehyde [(S)-ASA] and pyruvate to 4-hydroxy-tetrahydrodipicolinate (HTPA). The chain is 4-hydroxy-tetrahydrodipicolinate synthase from Haloarcula marismortui (strain ATCC 43049 / DSM 3752 / JCM 8966 / VKM B-1809) (Halobacterium marismortui).